A 209-amino-acid polypeptide reads, in one-letter code: Protein bli-3 (209 aa).

Positions 1–11 (MSGQGFSNADT) are enriched in polar residues. The segment at 1–24 (MSGQGFSNADTGNKPADPYKQANL) is disordered.

The chain is Protein bli-3 (bli-3) from Neurospora crassa (strain ATCC 24698 / 74-OR23-1A / CBS 708.71 / DSM 1257 / FGSC 987).